The chain runs to 368 residues: Cytochrome b (368 aa).

4 helical membrane-spanning segments follow: residues 33-53 (FGSLLGLCLITQILTGIFLAM), 77-99 (WLIRSIHANSASMFFICIYTHTG), 112-132 (TWMVGVTLLLITILTAFLGYV), and 178-198 (FYALHFLFPFLISALSLMHII). The heme b site is built by histidine 83 and histidine 97. Residues histidine 182 and histidine 196 each contribute to the heme b site. Histidine 201 provides a ligand contact to a ubiquinone. Transmembrane regions (helical) follow at residues 224–244 (FSAKDLIGVILLWIMLGSVVL), 288–308 (LGGVLALIMSIAILYFLPMMN), 323–343 (IAFWLLVTNFIVLMWIGSKPV), and 345–365 (SPFEEIGQIMTVTYFSIYMIM).

Belongs to the cytochrome b family. The main subunits of complex b-c1 are: cytochrome b, cytochrome c1 and the Rieske protein. It depends on heme b as a cofactor.

Its subcellular location is the mitochondrion inner membrane. In terms of biological role, component of the ubiquinol-cytochrome c reductase complex (complex III or cytochrome b-c1 complex) that is part of the mitochondrial respiratory chain. The b-c1 complex mediates electron transfer from ubiquinol to cytochrome c. Contributes to the generation of a proton gradient across the mitochondrial membrane that is then used for ATP synthesis. This Bugula neritina (Brown bryozoan) protein is Cytochrome b (mt:Cyt-b).